The chain runs to 595 residues: Torsin-1A-interacting protein 1 (595 aa).

The disordered stretch occupies residues 1–221 (MAGERWQAEG…GNTKTNEREA (221 aa)). At 1 to 351 (MAGERWQAEG…NEPSVKIKWW (351 aa)) the chain is on the nuclear side. Residues 24-38 (PIREGRRRLDPRNGD) are compositionally biased toward basic and acidic residues. At S60 the chain carries Phosphoserine. 2 stretches are compositionally biased toward basic and acidic residues: residues 70-101 (FEPR…EVRE) and 115-132 (RAQE…RLEQ). Residues 133–143 (HSQQPQLSPAT) are compositionally biased toward polar residues. A phosphoserine mark is found at S134, S140, S151, S153, S154, and S155. Positions 204-215 (LDSTYQTNGNTK) are enriched in polar residues. Phosphothreonine is present on T235. 3 positions are modified to phosphoserine: S241, S244, and S255. 2 disordered regions span residues 250–286 (ARSS…PAHE) and 319–340 (IQKS…AIHH). The segment covering 251–262 (RSSDSLESRDEA) has biased composition (basic and acidic residues). The segment covering 319–335 (IQKSNFGNQSPSTSRPQ) has biased composition (polar residues). Residue K321 forms a Glycyl lysine isopeptide (Lys-Gly) (interchain with G-Cter in SUMO2) linkage. S328 is subject to Phosphoserine. Residues 352-372 (LLGLVAILAVGLFWFFHTPAV) form a helical membrane-spanning segment. An interaction with TOR1A region spans residues 368 to 595 (HTPAVETTAV…ENTLKAGSCL (228 aa)). The stretch at 373 to 400 (ETTAVQEFQNQMKQLQSKYQSQNEKLWK) forms a coiled coil. The Perinuclear space portion of the chain corresponds to 373–595 (ETTAVQEFQN…ENTLKAGSCL (223 aa)). N-linked (GlcNAc...) asparagine glycosylation occurs at N411.

This sequence belongs to the TOR1AIP family. As to quaternary structure, interacts with ATP1B4. Interacts with TOR1A (ATP-bound). Interacts with TOR1B, TOR2A and TOR3A. Interacts with VIM. As to expression, expressed in the spinal cord and liver (at protein level).

The protein localises to the nucleus inner membrane. Required for nuclear membrane integrity. Induces TOR1A and TOR1B ATPase activity and is required for their location on the nuclear membrane. Binds to A- and B-type lamins. Possible role in membrane attachment and assembly of the nuclear lamina. This chain is Torsin-1A-interacting protein 1 (Tor1aip1), found in Mus musculus (Mouse).